The following is a 486-amino-acid chain: ATP synthase subunit beta (486 aa).

164-171 (GGAGVGKT) contacts ATP.

It belongs to the ATPase alpha/beta chains family. F-type ATPases have 2 components, CF(1) - the catalytic core - and CF(0) - the membrane proton channel. CF(1) has five subunits: alpha(3), beta(3), gamma(1), delta(1), epsilon(1). CF(0) has four main subunits: a(1), b(1), b'(1) and c(9-12).

Its subcellular location is the cellular thylakoid membrane. The enzyme catalyses ATP + H2O + 4 H(+)(in) = ADP + phosphate + 5 H(+)(out). Produces ATP from ADP in the presence of a proton gradient across the membrane. The catalytic sites are hosted primarily by the beta subunits. The chain is ATP synthase subunit beta from Prochlorococcus marinus (strain MIT 9312).